We begin with the raw amino-acid sequence, 257 residues long: UPF0246 protein RSc2009 (257 aa).

It belongs to the UPF0246 family.

The protein is UPF0246 protein RSc2009 of Ralstonia nicotianae (strain ATCC BAA-1114 / GMI1000) (Ralstonia solanacearum).